A 422-amino-acid chain; its full sequence is Dihydrolipoyllysine-residue succinyltransferase component of 2-oxoglutarate dehydrogenase complex (422 aa).

The region spanning 1–76 is the Lipoyl-binding domain; it reads MPEVKVPELA…EVGQAIAVIG (76 aa). Lys-42 is modified (N6-lipoyllysine). Residues 77 to 184 form a disordered region; the sequence is EGSGNASKEN…APAKEEKKYN (108 aa). Polar residues-rich tracts occupy residues 80–94 and 114–130; these read GNASKENSNDNTPQQ and EVNQTNDYNQQRVNATP. The 37-residue stretch at 127 to 163 folds into the Peripheral subunit-binding (PSBD) domain; the sequence is NATPSARRYARENGVNLAEVSPKTNDVVRKEDIDKKQ. The segment covering 152–163 has biased composition (basic and acidic residues); it reads DVVRKEDIDKKQ. Residues 164–176 show a composition bias toward low complexity; that stretch reads QAPASTQTTQQAP. Active-site residues include His-393 and Asp-397.

Belongs to the 2-oxoacid dehydrogenase family. As to quaternary structure, forms a 24-polypeptide structural core with octahedral symmetry. Part of the 2-oxoglutarate dehydrogenase (OGDH) complex composed of E1 (2-oxoglutarate dehydrogenase), E2 (dihydrolipoamide succinyltransferase) and E3 (dihydrolipoamide dehydrogenase); the complex contains multiple copies of the three enzymatic components (E1, E2 and E3). It depends on (R)-lipoate as a cofactor.

It catalyses the reaction N(6)-[(R)-dihydrolipoyl]-L-lysyl-[protein] + succinyl-CoA = N(6)-[(R)-S(8)-succinyldihydrolipoyl]-L-lysyl-[protein] + CoA. It participates in amino-acid degradation; L-lysine degradation via saccharopine pathway; glutaryl-CoA from L-lysine: step 6/6. E2 component of the 2-oxoglutarate dehydrogenase (OGDH) complex which catalyzes the second step in the conversion of 2-oxoglutarate to succinyl-CoA and CO(2). The sequence is that of Dihydrolipoyllysine-residue succinyltransferase component of 2-oxoglutarate dehydrogenase complex (odhB) from Staphylococcus aureus (strain bovine RF122 / ET3-1).